The following is a 212-amino-acid chain: Dephospho-CoA kinase (212 aa).

In terms of domain architecture, DPCK spans 3–207 (IIGLTGGIAS…RHLADDPEPG (205 aa)). Position 11–16 (11–16 (ASGKST)) interacts with ATP.

It belongs to the CoaE family.

It localises to the cytoplasm. The enzyme catalyses 3'-dephospho-CoA + ATP = ADP + CoA + H(+). It participates in cofactor biosynthesis; coenzyme A biosynthesis; CoA from (R)-pantothenate: step 5/5. In terms of biological role, catalyzes the phosphorylation of the 3'-hydroxyl group of dephosphocoenzyme A to form coenzyme A. The chain is Dephospho-CoA kinase from Moorella thermoacetica (strain ATCC 39073 / JCM 9320).